We begin with the raw amino-acid sequence, 459 residues long: Ribulose bisphosphate carboxylase large chain (459 aa).

The residue at position 4 (K4) is an N6,N6,N6-trimethyllysine. Residues N113 and T163 each contribute to the substrate site. K165 functions as the Proton acceptor in the catalytic mechanism. K167 is a substrate binding site. Mg(2+) contacts are provided by K191, D193, and E194. K191 carries the post-translational modification N6-carboxylysine. H284 serves as the catalytic Proton acceptor. Substrate is bound by residues R285, H317, and S369.

The protein belongs to the RuBisCO large chain family. Type I subfamily. In terms of assembly, heterohexadecamer of 8 large chains and 8 small chains; disulfide-linked. The disulfide link is formed within the large subunit homodimers. The cofactor is Mg(2+). In terms of processing, the disulfide bond which can form in the large chain dimeric partners within the hexadecamer appears to be associated with oxidative stress and protein turnover.

It is found in the plastid. The protein localises to the chloroplast. The catalysed reaction is 2 (2R)-3-phosphoglycerate + 2 H(+) = D-ribulose 1,5-bisphosphate + CO2 + H2O. The enzyme catalyses D-ribulose 1,5-bisphosphate + O2 = 2-phosphoglycolate + (2R)-3-phosphoglycerate + 2 H(+). Its function is as follows. RuBisCO catalyzes two reactions: the carboxylation of D-ribulose 1,5-bisphosphate, the primary event in carbon dioxide fixation, as well as the oxidative fragmentation of the pentose substrate in the photorespiration process. Both reactions occur simultaneously and in competition at the same active site. In Micranthes integrifolia (Wholeleaf saxifrage), this protein is Ribulose bisphosphate carboxylase large chain.